Consider the following 209-residue polypeptide: Glutathione S-transferase 1-1 (209 aa).

A GST N-terminal domain is found at 1–81; the sequence is MADFYYLPGS…YLVEKYGKTD (81 aa). Residues 51–53 and 65–67 each bind glutathione; these read HTI and ESR. The GST C-terminal domain maps to 87 to 209; that stretch reads CPKKRAVINQ…GCLEFKKYFE (123 aa).

This sequence belongs to the GST superfamily. Theta family. As to quaternary structure, homodimer.

It catalyses the reaction RX + glutathione = an S-substituted glutathione + a halide anion + H(+). Conjugation of reduced glutathione to a wide number of exogenous and endogenous hydrophobic electrophiles. The protein is Glutathione S-transferase 1-1 (GstD1) of Drosophila yakuba (Fruit fly).